The primary structure comprises 491 residues: Protein nucleotidyltransferase YdiU (491 aa).

Residues Gly88, Gly90, Arg91, Lys111, Asp123, Gly124, Arg174, and Arg181 each coordinate ATP. Asp250 serves as the catalytic Proton acceptor. Mg(2+) is bound by residues Asn251 and Asp260. Position 260 (Asp260) interacts with ATP.

This sequence belongs to the SELO family. It depends on Mg(2+) as a cofactor. Mn(2+) is required as a cofactor.

It catalyses the reaction L-seryl-[protein] + ATP = 3-O-(5'-adenylyl)-L-seryl-[protein] + diphosphate. The enzyme catalyses L-threonyl-[protein] + ATP = 3-O-(5'-adenylyl)-L-threonyl-[protein] + diphosphate. The catalysed reaction is L-tyrosyl-[protein] + ATP = O-(5'-adenylyl)-L-tyrosyl-[protein] + diphosphate. It carries out the reaction L-histidyl-[protein] + UTP = N(tele)-(5'-uridylyl)-L-histidyl-[protein] + diphosphate. It catalyses the reaction L-seryl-[protein] + UTP = O-(5'-uridylyl)-L-seryl-[protein] + diphosphate. The enzyme catalyses L-tyrosyl-[protein] + UTP = O-(5'-uridylyl)-L-tyrosyl-[protein] + diphosphate. Functionally, nucleotidyltransferase involved in the post-translational modification of proteins. It can catalyze the addition of adenosine monophosphate (AMP) or uridine monophosphate (UMP) to a protein, resulting in modifications known as AMPylation and UMPylation. The sequence is that of Protein nucleotidyltransferase YdiU from Rhodopseudomonas palustris (strain BisB18).